Here is a 921-residue protein sequence, read N- to C-terminus: TRPM8 channel-associated factor 1 (921 aa).

The Peptidase M60 domain maps to 542–841; sequence YCWMSTGLYI…TYLQLQEAFG (300 aa).

Belongs to the TCAF family. In terms of assembly, interacts with TRPM8 (via N-terminus and C-terminus domains); the interaction inhibits TRPM8 channel activity. Interacts with TRPV6.

It localises to the cell membrane. Its function is as follows. Positively regulates the plasma membrane cation channel TRPM8 activity. Involved in the recruitment of TRPM8 to the cell surface. Promotes prostate cancer cell migration inhibition in a TRPM8-dependent manner. The polypeptide is TRPM8 channel-associated factor 1 (Pongo abelii (Sumatran orangutan)).